The primary structure comprises 473 residues: Xylosidase/arabinosidase (473 aa).

Residue D18 is the Proton acceptor of the active site. The Proton donor role is filled by E209.

This sequence belongs to the glycosyl hydrolase 43 family. In terms of assembly, homotetramer.

It carries out the reaction Hydrolysis of (1-&gt;4)-beta-D-xylans, to remove successive D-xylose residues from the non-reducing termini.. The enzyme catalyses Hydrolysis of terminal non-reducing alpha-L-arabinofuranoside residues in alpha-L-arabinosides.. The protein is Xylosidase/arabinosidase (xylA) of Thermoclostridium stercorarium (Clostridium stercorarium).